The following is a 262-amino-acid chain: MSIVNILSVNVLNNPAKFSDPYKFEITFECLEPLKSDLEWKLTYVGSATSQSYDQILDTLLVGPIPIGINKFVFEADPPNIDLLPQLSDVLGVTVILLSCAYEDNEFVRVGYYVNNEMEGLNLQEMDDAEIKKVKVDISKVWRSILAEKPRVTRFNIQWDNPDFDDAPPVQPDADEEEEEEEADEMEEEFDEEGEGDEEEEEEDDGDGDGEGDGDGEGENDGKGSEEEEEEEIDIEEEEEESALANASAAEEKPEEKPETSQ.

A disordered region spans residues 157–262 (IQWDNPDFDD…KPEEKPETSQ (106 aa)). Coiled-coil stretches lie at residues 173–196 (DADE…EGEG) and 223–253 (KGSE…AEEK). 2 stretches are compositionally biased toward acidic residues: residues 173–219 (DADE…GEGE) and 226–242 (EEEE…EEES). Basic and acidic residues predominate over residues 250–262 (AEEKPEEKPETSQ).

This sequence belongs to the ASF1 family. Interacts with histone H3 and histone H4.

It localises to the nucleus. In terms of biological role, histone chaperone that facilitates histone deposition and histone exchange and removal during nucleosome assembly and disassembly. In Schizosaccharomyces pombe (strain 972 / ATCC 24843) (Fission yeast), this protein is Histone chaperone cia1 (cia1).